Consider the following 146-residue polypeptide: Protein MGF 100-3L (146 aa).

This sequence belongs to the asfivirus MGF 100 family.

Plays a role in virus cell tropism, and may be required for efficient virus replication in macrophages. This chain is Protein MGF 100-3L, found in Ornithodoros (relapsing fever ticks).